Consider the following 513-residue polypeptide: GMP synthase [glutamine-hydrolyzing] (513 aa).

The 191-residue stretch at 8–198 folds into the Glutamine amidotransferase type-1 domain; the sequence is MILVLDFGSQ…VFGVCECVGE (191 aa). The Nucleophile role is filled by C85. Catalysis depends on residues H172 and E174. The 190-residue stretch at 199 to 388 folds into the GMPS ATP-PPase domain; the sequence is WSMENFIEIE…LGIPDEIVWR (190 aa). 226–232 lines the ATP pocket; sequence SGGVDSS.

Homodimer.

The catalysed reaction is XMP + L-glutamine + ATP + H2O = GMP + L-glutamate + AMP + diphosphate + 2 H(+). The protein operates within purine metabolism; GMP biosynthesis; GMP from XMP (L-Gln route): step 1/1. Its function is as follows. Catalyzes the synthesis of GMP from XMP. The protein is GMP synthase [glutamine-hydrolyzing] of Bacillus licheniformis (strain ATCC 14580 / DSM 13 / JCM 2505 / CCUG 7422 / NBRC 12200 / NCIMB 9375 / NCTC 10341 / NRRL NRS-1264 / Gibson 46).